The chain runs to 345 residues: Acetylserotonin O-methyltransferase (345 aa).

S-adenosyl-L-methionine is bound by residues Tyr-147, Trp-164, Asp-210, 235–237 (GDF), and Arg-252. His-255 serves as the catalytic Proton donor/acceptor. Residues Asp-256, Asn-302, and Gln-306 each coordinate substrate.

Belongs to the class I-like SAM-binding methyltransferase superfamily. Cation-independent O-methyltransferase family. Homodimer. Highly expressed in pineal gland. In the retina, 10- to 100-fold lower expression compared to pineal gland, if any.

The enzyme catalyses N-acetylserotonin + S-adenosyl-L-methionine = melatonin + S-adenosyl-L-homocysteine + H(+). It functions in the pathway aromatic compound metabolism; melatonin biosynthesis; melatonin from serotonin: step 1/2. In terms of biological role, catalyzes the transfer of a methyl group onto N-acetylserotonin, producing melatonin (N-acetyl-5-methoxytryptamine). The sequence is that of Acetylserotonin O-methyltransferase (ASMT) from Macaca mulatta (Rhesus macaque).